Here is an 837-residue protein sequence, read N- to C-terminus: Vacuolar membrane protease (837 aa).

Residues Met-1–Lys-36 lie on the Cytoplasmic side of the membrane. Residues Thr-37–Asp-57 form a helical membrane-spanning segment. The Vacuolar portion of the chain corresponds to Asn-58–Arg-355. The N-linked (GlcNAc...) asparagine glycan is linked to Asn-143. 2 residues coordinate Zn(2+): His-157 and Asp-169. The Proton acceptor role is filled by Glu-201. Zn(2+)-binding residues include Glu-202, Glu-227, and His-299. A helical transmembrane segment spans residues Val-356 to Val-376. Residues Lys-377 to Arg-384 are Cytoplasmic-facing. A helical transmembrane segment spans residues Val-385 to Gly-405. The Vacuolar portion of the chain corresponds to Asn-406–Met-415. Residues Met-416–Val-436 traverse the membrane as a helical segment. Over Asp-437 to Lys-446 the chain is Cytoplasmic. A helical membrane pass occupies residues Leu-447–Ser-467. The Vacuolar segment spans residues Gly-468–Glu-474. Residues Phe-475–Trp-495 form a helical membrane-spanning segment. Over Thr-496 to Leu-539 the chain is Cytoplasmic. A helical membrane pass occupies residues Leu-540–Val-560. N-linked (GlcNAc...) asparagine glycosylation is present at Asn-561. Residues Asn-561 to His-572 are Vacuolar-facing. The chain crosses the membrane as a helical span at residues Leu-573 to Ile-593. Residues Thr-594–Arg-598 lie on the Cytoplasmic side of the membrane. Residues Tyr-599–His-619 traverse the membrane as a helical segment. The Vacuolar segment spans residues Pro-620 to Val-837. N-linked (GlcNAc...) asparagine glycosylation is present at Asn-689.

The protein belongs to the peptidase M28 family. Requires Zn(2+) as cofactor.

It is found in the vacuole membrane. Its function is as follows. May be involved in vacuolar sorting and osmoregulation. In Candida albicans (strain SC5314 / ATCC MYA-2876) (Yeast), this protein is Vacuolar membrane protease.